Consider the following 145-residue polypeptide: Heat shock protein hsp-16.2 (145 aa).

The region spanning 32–137 (VCRISPSESS…QGRSIPIQQA (106 aa)) is the sHSP domain.

This sequence belongs to the small heat shock protein (HSP20) family.

This chain is Heat shock protein hsp-16.2, found in Caenorhabditis elegans.